Reading from the N-terminus, the 127-residue chain is Competence protein ComGF (127 aa).

In terms of assembly, the transformation pili are flexible filaments, consisting mainly of the major pilin ComGC and smaller amounts of the minor pilins, including at least ComGD, ComGF and ComGG. Interacts with ComGD. Interacts with ComGG.

It localises to the cell membrane. Its subcellular location is the fimbrium. Required for formation of the type IV-like pilus (T4P) that plays a role in transformation. Involved in transformation. Transformation pili are dynamically extended and retracted, perhaps thereby promoting DNA uptake and transformation. Required for transformation and DNA binding. The chain is Competence protein ComGF (comGF) from Bacillus subtilis (strain 168).